The following is a 140-amino-acid chain: Large ribosomal subunit protein bL17 (140 aa).

The protein belongs to the bacterial ribosomal protein bL17 family. As to quaternary structure, part of the 50S ribosomal subunit. Contacts protein L32.

The protein is Large ribosomal subunit protein bL17 of Rhizobium etli (strain ATCC 51251 / DSM 11541 / JCM 21823 / NBRC 15573 / CFN 42).